The chain runs to 133 residues: Large ribosomal subunit protein bL12 (133 aa).

The disordered stretch occupies residues 98-118 (DMVESTPKPIKEGTGKEDAED).

This sequence belongs to the bacterial ribosomal protein bL12 family. Homodimer. Part of the ribosomal stalk of the 50S ribosomal subunit. Forms a multimeric L10(L12)X complex, where L10 forms an elongated spine to which 2 to 4 L12 dimers bind in a sequential fashion. Binds GTP-bound translation factors.

Functionally, forms part of the ribosomal stalk which helps the ribosome interact with GTP-bound translation factors. Is thus essential for accurate translation. The chain is Large ribosomal subunit protein bL12 from Crocosphaera subtropica (strain ATCC 51142 / BH68) (Cyanothece sp. (strain ATCC 51142)).